Reading from the N-terminus, the 171-residue chain is Ponticulin-like protein F (171 aa).

The signal sequence occupies residues 1 to 20; the sequence is MKFIPALIIFVFTIFALTNS. Glycine 149 is lipidated: GPI-like-anchor amidated glycine. Residues 150-171 constitute a propeptide, removed in mature form; that stretch reads TSSTIVIPFALILSLLLSVITL.

Belongs to the ponticulin family. The GPI-like-anchor contains a phosphoceramide group, rather than a phosphatidyl group.

Its subcellular location is the cell membrane. The sequence is that of Ponticulin-like protein F (ponF) from Dictyostelium discoideum (Social amoeba).